Reading from the N-terminus, the 154-residue chain is Protein X (154 aa).

Residues 68 to 117 are mitochondrial targeting sequence; sequence PCALRFTSARRMETTVNAPQSLPTTLHKRTLGLSPRSTTWIEEYIKDCVF.

This sequence belongs to the orthohepadnavirus protein X family. May form homodimer. May interact with host CEBPA, CFLAR, CREB1, DDB1, E4F1, HBXIP, HSPD1/HSP60, NFKBIA, POLR2E and SMAD4. Interacts with host SMC5-SMC6 complex and induces its degradation. Interacts with host TRPC4AP; leading to prevent ubiquitination of TRPC4AP. Interacts with host PLSCR1; this interaction promotes ubiquitination and degradation of HBx and impairs HBx-mediated cell proliferation. In terms of processing, a fraction may be phosphorylated in insect cells and HepG2 cells, a human hepatoblastoma cell line. Phosphorylated in vitro by host protein kinase C or mitogen-activated protein kinase. N-acetylated in insect cells.

It is found in the host cytoplasm. It localises to the host nucleus. The protein localises to the host mitochondrion. Its function is as follows. Multifunctional protein that plays a role in silencing host antiviral defenses and promoting viral transcription. Does not seem to be essential for HBV infection. May be directly involved in development of cirrhosis and liver cancer (hepatocellular carcinoma). Most of cytosolic activities involve modulation of cytosolic calcium. The effect on apoptosis is controversial depending on the cell types in which the studies have been conducted. May induce apoptosis by localizing in mitochondria and causing loss of mitochondrial membrane potential. May also modulate apoptosis by binding host CFLAR, a key regulator of the death-inducing signaling complex (DISC). Promotes viral transcription by using the host E3 ubiquitin ligase DDB1 to target the SMC5-SMC6 complex to proteasomal degradation. This host complex would otherwise bind to viral episomal DNA, and prevents its transcription. Moderately stimulates transcription of many different viral and cellular transcription elements. Promoters and enhancers stimulated by HBx contain DNA binding sites for NF-kappa-B, AP-1, AP-2, c-EBP, ATF/CREB, or the calcium-activated factor NF-AT. This is Protein X from Hepatitis B virus genotype H subtype adw4 (isolate Nicaragua/2928Nic/1997) (HBV-H).